Here is a 307-residue protein sequence, read N- to C-terminus: uncharacterized protein (307 aa).

This is an uncharacterized protein from Acanthamoeba polyphaga mimivirus (APMV).